The primary structure comprises 238 residues: Thymidine kinase, cytosolic (238 aa).

Serine 2 is subject to N-acetylserine. Residues serine 2 and serine 13 each carry the phosphoserine modification. ATP contacts are provided by residues 26–33, 58–60, and 97–100; these read GPMFSGKS, DTR, and DEGQ. Glutamate 98 (proton acceptor) is an active-site residue. Residue phenylalanine 128 participates in substrate binding. Residues cysteine 153 and cysteine 156 each contribute to the Zn(2+) site. Substrate is bound by residues 172–176 and tyrosine 181; that span reads VEVIG. Zn(2+) is bound by residues cysteine 185 and cysteine 188. The short motif at 206 to 208 is the KEN box element; the sequence is KEN. Serine 235 carries the phosphoserine modification.

It belongs to the thymidine kinase family. In terms of assembly, homotetramer. Tetramerization from dimerization is induced by ATP and increases catalytic efficiency due to a high affinity for thymidine. Tetramerization is inhibited by phosphorylation at Ser-13. Interacts (via the KEN box) with FZR1. Phosphorylated on Ser-13 in mitosis. Phosphorylation of Ser-13 by CDK1 during mitosis reduces homotetramerization and catalytic efficiency when DNA replication is complete and intracellular TK1 is still present at a high level. Post-translationally, polyubiquitinated. Postmitosis, ubiquitination leads to proteasomal degradation. The KEN box sequence located at the C-terminal region targets for degradation by the anaphase promoting complex (APC/C) activated and rate-limited by FZR1.

The protein resides in the cytoplasm. It catalyses the reaction thymidine + ATP = dTMP + ADP + H(+). In terms of biological role, cell-cycle-regulated enzyme of importance in nucleotide metabolism. Catalyzes the first enzymatic step in the salvage pathway converting thymidine into thymidine monophosphate. Transcriptional regulation limits expression to the S phase of the cell cycle and transient expression coincides with the oscillation in the intracellular dTTP concentration. This is Thymidine kinase, cytosolic (TK1) from Bos taurus (Bovine).